A 164-amino-acid polypeptide reads, in one-letter code: uncharacterized protein (164 aa).

This is an uncharacterized protein from Methanocaldococcus jannaschii (strain ATCC 43067 / DSM 2661 / JAL-1 / JCM 10045 / NBRC 100440) (Methanococcus jannaschii).